The following is a 567-amino-acid chain: Sensor histidine kinase MtrB (567 aa).

Over residues 1–15 the composition is skewed to basic residues; sequence MIFGSRRRIRGRRGR. A disordered region spans residues 1–20; sequence MIFGSRRRIRGRRGRSGPMT. The next 2 helical transmembrane spans lie at 42-62 and 213-233; these read VVAL…FVLT and GTMA…ALLV. Residues 235–287 enclose the HAMP domain; it reads RQVVVPVRSASRIAERFAEGHLSERMPVRGEDDMARLAVSFNDMAESLSRQIA. A Histidine kinase domain is found at 302-519; sequence DVSHELRTPL…CFRLTLPMVR (218 aa). At histidine 305 the chain carries Phosphohistidine; by autocatalysis. A compositionally biased stretch (pro residues) spans 529-551; it reads PMKPIPQPVLQPVAQPNPQPMPP. Positions 529–567 are disordered; the sequence is PMKPIPQPVLQPVAQPNPQPMPPEYKERQRPREHAEWSG. The segment covering 552 to 567 has biased composition (basic and acidic residues); sequence EYKERQRPREHAEWSG.

As to quaternary structure, interacts with MrtA. Interacts with LpqB, probably extracytoplasmically via MtrB's sensor domain. Mg(2+) serves as cofactor. Ca(2+) is required as a cofactor. The C-terminal domain (residues 234-567) autophosphorylates.

The protein localises to the cell membrane. It carries out the reaction ATP + protein L-histidine = ADP + protein N-phospho-L-histidine.. Ca(2+) ions inhibit the phosphotransfer from MtrB to MtrA. In terms of biological role, member of the two-component regulatory system MtrA/MtrB. Probably functions as a membrane-associated protein kinase that phosphorylates MtrA in response to environmental signals. Autophosphorylates and transfers phosphate to MtrA in vitro. Overexpression of MtrA alone decreases bacterial virulence in mouse infection; co-expression of MtrA and MtrB restores normal bacterial growth, suggesting that bacterial growth in macrophages requires an optimal ratio of MtrB to MtrA. Probably plays a role in cell division. The protein is Sensor histidine kinase MtrB (mtrB) of Mycobacterium tuberculosis (strain ATCC 25618 / H37Rv).